The sequence spans 502 residues: Actin-binding protein WASF3 (502 aa).

The stretch at 57 to 93 (NEANNFYIRANSLQDRIDRLAVKVTQLDSTVEEVSLQ) forms a coiled coil. A Phosphotyrosine; by ABL1 modification is found at Tyr-151. Positions 162–206 (KEKMLQDTEDKRKEKRRQKEQKRIDGTTREVKKVRKARNRRQEWN) form a coiled coil. 2 disordered regions span residues 169-210 (TEDK…MMAY) and 223-443 (SVYH…ARSD). Over residues 182–192 (QKRIDGTTREV) the composition is skewed to basic and acidic residues. A compositionally biased stretch (polar residues) spans 223–237 (SVYHGASSEGSLSPD). The residue at position 248 (Tyr-248) is a Phosphotyrosine; by ABL1. The segment covering 302–312 (QQPPPPPPPQA) has biased composition (pro residues). Tyr-337 is subject to Phosphotyrosine; by ABL1. Pro residues-rich tracts occupy residues 341-352 (SGPPPPPPPPVI) and 394-410 (APPP…PPGP). Low complexity predominate over residues 411-423 (GSSLSSSPMHGPP). One can recognise a WH2 domain in the interval 440–457 (ARSDLLAAIRMGIQLKKV). The residue at position 486 (Tyr-486) is a Phosphotyrosine; by ABL1.

Belongs to the SCAR/WAVE family. Binds actin and the Arp2/3 complex. Phosphorylation by ABL1 promotes lamellipodia formation and cell migration. In terms of tissue distribution, expressed in ovary and brain.

It localises to the cytoplasm. It is found in the cytoskeleton. In terms of biological role, downstream effector molecules involved in the transmission of signals from tyrosine kinase receptors and small GTPases to the actin cytoskeleton. Plays a role in the regulation of cell morphology and cytoskeletal organization. Required in the control of cell shape. In Homo sapiens (Human), this protein is Actin-binding protein WASF3 (WASF3).